Consider the following 607-residue polypeptide: Protease Do-like 2, chloroplastic (607 aa).

The disordered stretch occupies residues S41–T104. Residues P87–T104 are compositionally biased toward basic and acidic residues. Residues V118 to Y317 form a serine protease region. Catalysis depends on charge relay system residues H159, D190, and S268. A PDZ domain is found at L308–D403.

This sequence belongs to the peptidase S1C family.

It is found in the plastid. It localises to the chloroplast thylakoid membrane. Functionally, serine protease that performs the primary cleavage of the photodamaged D1 protein in plant photosystem II. This chain is Protease Do-like 2, chloroplastic (DEGP2), found in Arabidopsis thaliana (Mouse-ear cress).